Reading from the N-terminus, the 496-residue chain is Iroquois-class homeodomain protein irx-4 (496 aa).

A DNA-binding region (homeobox; TALE-type) is located at residues 141–203 (GSTRRKNATR…NARRRLKKEN (63 aa)). The tract at residues 203–236 (NKMTWPPRNKCSDEKRPYDEEEEEEEEEDSQKAT) is disordered. The segment covering 221-231 (DEEEEEEEEED) has biased composition (acidic residues).

It belongs to the TALE/IRO homeobox family. As to expression, expressed in the neural plate in overlapping patterns with other irx members, which all share an anterior border of expression. Broadly expressed in the tailbud rhombencephalon (hindbrain). Outside the nervous system and at tailbud stages, expressed in the developing otic vesicle, branchial arches and prospective heart region.

The protein resides in the nucleus. Acts partially redundantly with other irx members in neural patterning. Required for formation of the posterior forebrain, midbrain, hindbrain, and to a lesser extent, spinal cord. Patterns the neuroectoderm in both the anterior/posterior and dorsal/ventral axes. Does not appear to play a role in pronephros kidney development. The sequence is that of Iroquois-class homeodomain protein irx-4 from Xenopus tropicalis (Western clawed frog).